Reading from the N-terminus, the 262-residue chain is Small ribosomal subunit protein uS2 (262 aa).

Positions 225-262 are disordered; sequence KQGEQLTEEAKPEDKEDEKGQAEEKEVKEENNSANKEE. The span at 232 to 262 shows a compositional bias: basic and acidic residues; the sequence is EEAKPEDKEDEKGQAEEKEVKEENNSANKEE.

Belongs to the universal ribosomal protein uS2 family.

This chain is Small ribosomal subunit protein uS2, found in Halothermothrix orenii (strain H 168 / OCM 544 / DSM 9562).